A 338-amino-acid polypeptide reads, in one-letter code: Secretory carrier-associated membrane protein 1 (338 aa).

The interval 1 to 64 is disordered; sequence MSDFDSNPFA…NVPNTQPAIM (64 aa). Ser2 carries the N-acetylserine modification. Ser2 is modified (phosphoserine). Residues 2-155 lie on the Cytoplasmic side of the membrane; the sequence is SDFDSNPFAD…QKTVKLMYYL (154 aa). Position 45 is a phosphothreonine (Thr45). A helical transmembrane segment spans residues 156-176; sequence WMFHAVTLFLNIFGCLAWFCV. Residues 177–181 lie on the Lumenal side of the membrane; sequence DSSRA. A helical membrane pass occupies residues 182–202; sequence VDFGLSILWFLLFTPCSFVCW. Topologically, residues 203–218 are cytoplasmic; the sequence is YRPLYGAFRSDSSFRF. Residues 219-239 traverse the membrane as a helical segment; it reads FVFFFVYICQFAVHVLQAAGF. Residues 240–261 lie on the Lumenal side of the membrane; it reads HNWGNCGWISSLTGLNKNIPVG. Residues 262-282 form a helical membrane-spanning segment; it reads IMMIIIAALFTASAVISLVMF. Residues 283–338 are Cytoplasmic-facing; it reads KKVHGLYRTTGASFEKAQQEFATGVMSNKTVQTAAANAASTAATSAAQNAFKGNQM.

Belongs to the SCAMP family. In terms of assembly, interacts with SYNRG, ITSN1 and SLC9A7.

It localises to the golgi apparatus. Its subcellular location is the trans-Golgi network membrane. The protein resides in the recycling endosome membrane. Functions in post-Golgi recycling pathways. Acts as a recycling carrier to the cell surface. This Mus musculus (Mouse) protein is Secretory carrier-associated membrane protein 1 (Scamp1).